The sequence spans 201 residues: 3-isopropylmalate dehydratase small subunit (201 aa).

Belongs to the LeuD family. LeuD type 1 subfamily. As to quaternary structure, heterodimer of LeuC and LeuD.

It carries out the reaction (2R,3S)-3-isopropylmalate = (2S)-2-isopropylmalate. It functions in the pathway amino-acid biosynthesis; L-leucine biosynthesis; L-leucine from 3-methyl-2-oxobutanoate: step 2/4. In terms of biological role, catalyzes the isomerization between 2-isopropylmalate and 3-isopropylmalate, via the formation of 2-isopropylmaleate. This Enterobacter sp. (strain 638) protein is 3-isopropylmalate dehydratase small subunit.